The primary structure comprises 856 residues: Mechanosensitive ion channel protein 6 (856 aa).

Disordered stretches follow at residues 45 to 86 and 116 to 226; these read GEGN…DPPT and RGLT…PFAA. Basic and acidic residues-rich tracts occupy residues 70–85 and 129–140; these read QQKDEGFEFRRGEDPP and TKRDPVGRRDSR. The span at 155–168 shows a compositional bias: polar residues; the sequence is SGNNAPIQRSSSTL. Ser-211 is modified (phosphoserine). Residues 217 to 226 show a composition bias toward acidic residues; the sequence is EEEEDDPFAA. Transmembrane regions (helical) follow at residues 242 to 262, 283 to 303, 323 to 343, and 360 to 380; these read IVLEWLSLILIIAGFVCTLAI, LVLICGRLVSSWIVKIVVFFI, AVQNCLWLGLVLLAWHFLFDE, and IFVCLLVGFLLWLVKTLLVKV. A Phosphoserine modification is found at Ser-462. 2 helical membrane passes run 615–635 and 651–671; these read MVNIVVGIIILVIWLIILGIT and AFIFGNMCKIVFESIIYLFVI.

Belongs to the MscS (TC 1.A.23) family.

The protein localises to the membrane. Mechanosensitive channel that opens in response to stretch forces in the membrane lipid bilayer. The chain is Mechanosensitive ion channel protein 6 (MSL6) from Arabidopsis thaliana (Mouse-ear cress).